A 57-amino-acid polypeptide reads, in one-letter code: Preprotein translocase subunit SecG (57 aa).

Over 1-33 the chain is Cytoplasmic; that stretch reads MARRRRYEGLNPFVAAGLIKFSEEGELERIKLT. The helical transmembrane segment at 34–55 threads the bilayer; sequence PKSAVVISVALIAAILVLNLIH. Topologically, residues 56-57 are extracellular; that stretch reads PL.

It belongs to the SEC61-beta family. Component of the protein translocase complex. Heterotrimer consisting of alpha (SecY), beta (SecG) and gamma (SecE) subunits. Can form oligomers of the heterotrimer.

It is found in the cell membrane. Involved in protein export. The function of the beta subunit is unknown, but it may be involved in stabilization of the trimeric complex. The chain is Preprotein translocase subunit SecG from Pyrobaculum neutrophilum (strain DSM 2338 / JCM 9278 / NBRC 100436 / V24Sta) (Thermoproteus neutrophilus).